A 553-amino-acid polypeptide reads, in one-letter code: MGSRSSTRIPVPLMLTVRVALALSCVCPTSSLDGRPLAAAGIVVTGDKAVNIYTSSQTGSIIVKLLPNMPKDKEACAKAPLEAYNRTLTTLLTPLGDSIRRIQESVTTSGGGKQGRLIGAIIGGAALGVATAAQITAASALILANQNAANILRLKESIAATNEAVHEVTDGLSQLAVAVGKMQQFVNDQFNKTAQELDCIKITQQVGVELNLYLTELTTVFGPQITSPALTQLTIQALYNLAGGNMDYLLTKLGVGNNQLSSLIGSGLITGNPILYDSQTQLLGIQVTLPSVGNLNNMRATYLETLSVSTTKGFASALVPKVVTQVGSVIEELDTSYCIETDLDLYCTRIVTFPMSPGIYSCLSGNTSACMYSKTEGALTTPYMTLKGSVIANCKMTTCRSADPPGIISQNYGEAVSLIDRQSCNVLSLDGITLRLSGEFDATYQKNISIQDSQVIVTGNLDISTELGNVNNSISNALDKLEESNSKLDKVNVKLTSTSALITYIVLTVISLVCGILSLVLACYLMYKQKAQQKTLLWLGNNTLDQMRATTKM.

An N-terminal signal peptide occupies residues 1–31; that stretch reads MGSRSSTRIPVPLMLTVRVALALSCVCPTSS. The Extracellular segment spans residues 32–500; that stretch reads LDGRPLAAAG…VNVKLTSTSA (469 aa). 4 cysteine pairs are disulfide-bonded: Cys-76/Cys-199, Cys-338/Cys-347, Cys-362/Cys-370, and Cys-394/Cys-399. N-linked (GlcNAc...) asparagine; by host glycosylation occurs at Asn-85. The interval 117–141 is fusion peptide; it reads LIGAIIGGAALGVATAAQITAASAL. A coiled-coil region spans residues 142–170; sequence ILANQNAANILRLKESIAATNEAVHEVTD. A glycan (N-linked (GlcNAc...) asparagine; by host) is linked at Asn-191. Asn-366 is a glycosylation site (N-linked (GlcNAc...) asparagine; by host). N-linked (GlcNAc...) asparagine; by host glycosylation is found at Asn-447 and Asn-471. A coiled-coil region spans residues 466–491; it reads ELGNVNNSISNALDKLEESNSKLDKV. The helical transmembrane segment at 501-521 threads the bilayer; sequence LITYIVLTVISLVCGILSLVL. Over 522–553 the chain is Cytoplasmic; the sequence is ACYLMYKQKAQQKTLLWLGNNTLDQMRATTKM. Cys-523 carries S-palmitoyl cysteine; by host lipidation.

It belongs to the paramyxoviruses fusion glycoprotein family. As to quaternary structure, homotrimer of disulfide-linked F1-F2. In terms of processing, the inactive precursor F0 is glycosylated and proteolytically cleaved into F1 and F2 to be functionally active. The cleavage is mediated by cellular proteases during the transport and maturation of the polypeptide.

It localises to the virion membrane. The protein localises to the host cell membrane. In terms of biological role, class I viral fusion protein. Under the current model, the protein has at least 3 conformational states: pre-fusion native state, pre-hairpin intermediate state, and post-fusion hairpin state. During viral and plasma cell membrane fusion, the heptad repeat (HR) regions assume a trimer-of-hairpins structure, positioning the fusion peptide in close proximity to the C-terminal region of the ectodomain. The formation of this structure appears to drive apposition and subsequent fusion of viral and plasma cell membranes. Directs fusion of viral and cellular membranes leading to delivery of the nucleocapsid into the cytoplasm. This fusion is pH independent and occurs directly at the outer cell membrane. The trimer of F1-F2 (F protein) probably interacts with HN at the virion surface. Upon HN binding to its cellular receptor, the hydrophobic fusion peptide is unmasked and interacts with the cellular membrane, inducing the fusion between cell and virion membranes. Later in infection, F proteins expressed at the plasma membrane of infected cells could mediate fusion with adjacent cells to form syncytia, a cytopathic effect that could lead to tissue necrosis. This chain is Fusion glycoprotein F0 (F), found in Gallus gallus (Chicken).